The following is a 354-amino-acid chain: D-alanine--D-alanine ligase (354 aa).

The ATP-grasp domain occupies Lys-133 to Glu-338. Glu-166–Glu-221 contacts ATP. Mg(2+) contacts are provided by Asp-292, Glu-305, and Asn-307.

It belongs to the D-alanine--D-alanine ligase family. Requires Mg(2+) as cofactor. It depends on Mn(2+) as a cofactor.

The protein resides in the cytoplasm. It carries out the reaction 2 D-alanine + ATP = D-alanyl-D-alanine + ADP + phosphate + H(+). Its pathway is cell wall biogenesis; peptidoglycan biosynthesis. In terms of biological role, cell wall formation. In Bacillus velezensis (strain DSM 23117 / BGSC 10A6 / LMG 26770 / FZB42) (Bacillus amyloliquefaciens subsp. plantarum), this protein is D-alanine--D-alanine ligase.